A 943-amino-acid chain; its full sequence is Aconitate hydratase A (943 aa).

The [4Fe-4S] cluster site is built by Cys-479, Cys-545, and Cys-548.

It belongs to the aconitase/IPM isomerase family. Monomer. The cofactor is [4Fe-4S] cluster.

It catalyses the reaction citrate = D-threo-isocitrate. The enzyme catalyses (2S,3R)-3-hydroxybutane-1,2,3-tricarboxylate = 2-methyl-cis-aconitate + H2O. Its pathway is carbohydrate metabolism; tricarboxylic acid cycle; isocitrate from oxaloacetate: step 2/2. The protein operates within organic acid metabolism; propanoate degradation. In terms of biological role, involved in the catabolism of short chain fatty acids (SCFA) via the tricarboxylic acid (TCA)(acetyl degradation route) and probably via the 2-methylcitrate cycle I (propionate degradation route). Catalyzes the reversible isomerization of citrate to isocitrate via cis-aconitate. The apo form of AcnA functions as a RNA-binding regulatory protein which binds to selected IRE-like sequences present within the UTRs (untranslated regions) of 3' trxC and 5' IdeR mRNA. Could catalyze the hydration of 2-methyl-cis-aconitate to yield (2R,3S)-2-methylisocitrate. This Mycobacterium tuberculosis (strain ATCC 25618 / H37Rv) protein is Aconitate hydratase A (acn).